Here is a 418-residue protein sequence, read N- to C-terminus: Delta(14)-sterol reductase TM7SF2 (418 aa).

Transmembrane regions (helical) follow at residues 13–35 (FGGP…HLLL), 62–81 (ALLL…LLPA), 102–124 (GFQA…LPLS), 129–148 (MLLP…SLLL), 255–277 (FGFM…QAQF), and 287–304 (WPLA…YYIF). NADP(+) is bound by residues lysine 311, arginine 315, leucine 338, tryptophan 343, and 350-351 (NY). Residues 355 to 377 (LIMALAWSLPCGVFHLLPYFYFL) form a helical membrane-spanning segment. Residues aspartate 390, 394-398 (CRQKY), and tyrosine 405 each bind NADP(+).

This sequence belongs to the ERG4/ERG24 family. Highly expressed in liver and brain.

The protein resides in the microsome membrane. The protein localises to the endoplasmic reticulum membrane. The catalysed reaction is 4,4-dimethyl-5alpha-cholesta-8,24-dien-3beta-ol + NADP(+) = 4,4-dimethyl-5alpha-cholesta-8,14,24-trien-3beta-ol + NADPH + H(+). It carries out the reaction 5alpha-cholest-8,14-dien-3beta-ol + NADPH + H(+) = 5alpha-cholest-8-en-3beta-ol + NADP(+). It catalyses the reaction 4,4-dimethyl-8,14-cholestadien-3beta-ol + NADPH + H(+) = 4,4-dimethyl-5alpha-cholest-8-en-3beta-ol + NADP(+). It participates in steroid biosynthesis; cholesterol biosynthesis. Catalyzes the reduction of the C14-unsaturated bond of lanosterol, as part of the metabolic pathway leading to cholesterol biosynthesis. The chain is Delta(14)-sterol reductase TM7SF2 (TM7SF2) from Bos taurus (Bovine).